Reading from the N-terminus, the 120-residue chain is MKVSVAALSCLMLVTALGSQARVTKDAETEFMMSKLPLENPVLLDRFHATSADCCISYTPRSIPCSLLESYFETNSECSKPGVIFLTKKGRRFCANPSDKQVQVCMRMLKLDTRIKTRKN.

The signal sequence occupies residues 1–21 (MKVSVAALSCLMLVTALGSQA). Intrachain disulfides connect C54–C78, C55–C94, and C65–C105.

It belongs to the intercrine beta (chemokine CC) family. In terms of processing, the N-terminal is proteolytically cleaved by proteases associated with inflammatory responses. The processed forms, CCL23(19-99), CCL23(22-99), CCL23(27-99) and CCL23(30-99) exhibit increase in CCR1-mediated signaling and chemotaxis assays in vitro. As to expression, high levels in adult lung, liver, skeletal muscle and pancreas. Moderate levels in fetal liver, adult bone marrow and placenta. The short form is the major species and the longer form was detected only in very low abundance. CCL23(19-99), CCL23(22-99), CCL23(27-99), CCL23(30-99) are found in high levels in synovial fluids from rheumatoid patients.

Its subcellular location is the secreted. Functionally, shows chemotactic activity for monocytes, resting T-lymphocytes, and neutrophils, but not for activated lymphocytes. Inhibits proliferation of myeloid progenitor cells in colony formation assays. This protein can bind heparin. Binds CCR1. CCL23(19-99), CCL23(22-99), CCL23(27-99), CCL23(30-99) are more potent chemoattractants than CCL23. This Homo sapiens (Human) protein is C-C motif chemokine 23 (CCL23).